The primary structure comprises 407 residues: E3 ubiquitin-protein ligase IE2 (407 aa).

Over residues 1–10 (MSRQINAATP) the composition is skewed to polar residues. The tract at residues 1–69 (MSRQINAATP…RVSEENVQII (69 aa)) is disordered. Residues 13–25 (SRHHRLSLSRRRI) are compositionally biased toward basic residues. Residues 31–47 (SEAQPSSSSRSQTSSSS) show a composition bias toward low complexity. Residues 127–158 (QQYQNNIASETAAQRALQRALDLEAQLMNEIA) are a coiled coil. A disordered region spans residues 179–200 (QSPDLFASPQSSEQQQQSEPEE). Residues 186–196 (SPQSSEQQQQS) show a composition bias toward low complexity. The RING-type; degenerate zinc-finger motif lies at 206–254 (CNICFTTFKDTKNVNSSFVTTTHCNHAVCFKCYVKIIMANSVYKCFCSA). Residues 336-393 (LKHKHAVAELDLQKANYDLQESTKKSEELQSTVNNLQEQLNKQVVESQAKFLEFERNN) are a coiled coil.

This sequence belongs to the alphabaculovirus IE2 protein family. As to quaternary structure, homooligomer. In terms of processing, auto-ubiquitinated.

It localises to the host nucleus. The catalysed reaction is S-ubiquitinyl-[E2 ubiquitin-conjugating enzyme]-L-cysteine + [acceptor protein]-L-lysine = [E2 ubiquitin-conjugating enzyme]-L-cysteine + N(6)-ubiquitinyl-[acceptor protein]-L-lysine.. Its function is as follows. RING-finger E3 ubiquitin ligase that plays an important regulatory role during the initial stages of infection. Migrates to specific nuclear foci early in infection supposely to prepare the sites for viral replication by targeting and ubiquitinating host proteins. This chain is E3 ubiquitin-protein ligase IE2 (IE2), found in Rachiplusia ou multiple nucleopolyhedrovirus (strain R1) (RoMNPV).